A 351-amino-acid polypeptide reads, in one-letter code: Glycerol-1-phosphate dehydrogenase [NAD(P)+] (351 aa).

NAD(+) contacts are provided by residues 97–101 and 119–122; these read GKVID and TSPS. Position 124 (Asp124) interacts with substrate. Ser128 provides a ligand contact to NAD(+). Asp171 contacts substrate. Positions 171 and 251 each coordinate Zn(2+). A substrate-binding site is contributed by His255. His267 provides a ligand contact to Zn(2+).

It belongs to the glycerol-1-phosphate dehydrogenase family. In terms of assembly, homodimer. It depends on Zn(2+) as a cofactor.

It localises to the cytoplasm. It catalyses the reaction sn-glycerol 1-phosphate + NAD(+) = dihydroxyacetone phosphate + NADH + H(+). The enzyme catalyses sn-glycerol 1-phosphate + NADP(+) = dihydroxyacetone phosphate + NADPH + H(+). It functions in the pathway membrane lipid metabolism; glycerophospholipid metabolism. Its function is as follows. Catalyzes the NAD(P)H-dependent reduction of dihydroxyacetonephosphate (DHAP or glycerone phosphate) to glycerol 1-phosphate (G1P). The G1P thus generated is used as the glycerophosphate backbone of phospholipids in the cellular membranes of Archaea. The sequence is that of Glycerol-1-phosphate dehydrogenase [NAD(P)+] from Saccharolobus solfataricus (strain ATCC 35092 / DSM 1617 / JCM 11322 / P2) (Sulfolobus solfataricus).